We begin with the raw amino-acid sequence, 329 residues long: Glycerol-3-phosphate dehydrogenase [NAD(P)+] (329 aa).

4 residues coordinate NADPH: Ser13, Trp14, His34, and Lys105. Lys105, Gly134, and Ser136 together coordinate sn-glycerol 3-phosphate. Ala138 is an NADPH binding site. Lys189, Asp242, Ser252, Arg253, and Asn254 together coordinate sn-glycerol 3-phosphate. The active-site Proton acceptor is Lys189. Arg253 contacts NADPH. NADPH-binding residues include Val277 and Glu279.

This sequence belongs to the NAD-dependent glycerol-3-phosphate dehydrogenase family.

The protein resides in the cytoplasm. The enzyme catalyses sn-glycerol 3-phosphate + NAD(+) = dihydroxyacetone phosphate + NADH + H(+). The catalysed reaction is sn-glycerol 3-phosphate + NADP(+) = dihydroxyacetone phosphate + NADPH + H(+). Its pathway is membrane lipid metabolism; glycerophospholipid metabolism. Its function is as follows. Catalyzes the reduction of the glycolytic intermediate dihydroxyacetone phosphate (DHAP) to sn-glycerol 3-phosphate (G3P), the key precursor for phospholipid synthesis. This is Glycerol-3-phosphate dehydrogenase [NAD(P)+] from Legionella pneumophila (strain Lens).